Consider the following 284-residue polypeptide: MKQKVVSIGDINVANDLPFVLFGGMNVLESRDLAMRICEHYVTVTQKLGIPYVFKASFDKANRSSIHSYRGPGLEEGMKIFQELKQQFGVKVITDVHEASQAQPVSEVVDVIQLPAFLARQTDLVEAMARTGAVINVKKPQFVSPGQMGNIVEKFKEAGNDQVILCDRGSNFGYDNLVVDMLGINVMVQATGGHPVIFDVTHALQCRDPFGAASGGRRAQVAELARAGMAVGLAGLFIEAHPEPNSAKCDGPSALPLDKLEPFLVQMKAIDDLVKSFPALDTSK.

Belongs to the KdsA family.

It localises to the cytoplasm. The catalysed reaction is D-arabinose 5-phosphate + phosphoenolpyruvate + H2O = 3-deoxy-alpha-D-manno-2-octulosonate-8-phosphate + phosphate. The protein operates within carbohydrate biosynthesis; 3-deoxy-D-manno-octulosonate biosynthesis; 3-deoxy-D-manno-octulosonate from D-ribulose 5-phosphate: step 2/3. It functions in the pathway bacterial outer membrane biogenesis; lipopolysaccharide biosynthesis. This chain is 2-dehydro-3-deoxyphosphooctonate aldolase, found in Yersinia pseudotuberculosis serotype O:1b (strain IP 31758).